The sequence spans 308 residues: Glycosyltransferase 6 domain-containing protein 1 (308 aa).

Residues 1–6 are Cytoplasmic-facing; that stretch reads MNSKRM. The chain crosses the membrane as a helical; Signal-anchor for type II membrane protein span at residues 7–23; sequence LLLVLFAFSLMLVERYF. The Lumenal portion of the chain corresponds to 24–308; the sequence is RNHQVEELRL…KVAHDSHRKL (285 aa). N74 carries an N-linked (GlcNAc...) asparagine glycan. Substrate contacts are provided by residues 82–87, 173–175, and 195–198; these read FATGRF, AVN, and HAWW. E263 serves as the catalytic Nucleophile.

This sequence belongs to the glycosyltransferase 6 family. Mn(2+) is required as a cofactor.

It localises to the membrane. This chain is Glycosyltransferase 6 domain-containing protein 1 (GLT6D1), found in Macaca fascicularis (Crab-eating macaque).